The primary structure comprises 123 residues: UPF0102 protein Csal_2201 (123 aa).

The protein belongs to the UPF0102 family.

This Chromohalobacter salexigens (strain ATCC BAA-138 / DSM 3043 / CIP 106854 / NCIMB 13768 / 1H11) protein is UPF0102 protein Csal_2201.